An 822-amino-acid polypeptide reads, in one-letter code: Pentatricopeptide repeat-containing protein At2g41720 (822 aa).

Residues 1-28 (MATVTNFKLVTPPESSRADKPGATKASD) form a disordered region. PPR repeat units follow at residues 106–136 (ARKNFPVLIRELSRRGCIELCVNVFKWMKIQ), 142–176 (RNDIYNMMIRLHARHNWVDQARGLFFEMQKWSCKP), 177–211 (DAETYDALINAHGRAGQWRWAMNLMDDMLRAAIAP), 212–246 (SRSTYNNLINACGSSGNWREALEVCKKMTDNGVGP), 247–281 (DLVTHNIVLSAYKSGRQYSKALSYFELMKGAKVRP), 282–316 (DTTTFNIIIYCLSKLGQSSQALDLFNSMREKRAEC), 319–353 (DVVTFTSIMHLYSVKGEIENCRAVFEAMVAEGLKP), 354–388 (NIVSYNALMGAYAVHGMSGTALSVLGDIKQNGIIP), 389–423 (DVVSYTCLLNSYGRSRQPGKAKEVFLMMRKERRKP), 424–458 (NVVTYNALIDAYGSNGFLAEAVEIFRQMEQDGIKP), 459–493 (NVVSVCTLLAACSRSKKKVNVDTVLSAAQSRGINL), 494–528 (NTAAYNSAIGSYINAAELEKAIALYQSMRKKKVKA), 529–563 (DSVTFTILISGSCRMSKYPEAISYLKEMEDLSIPL), 564–598 (TKEVYSSVLCAYSKQGQVTEAESIFNQMKMAGCEP), 599–633 (DVIAYTSMLHAYNASEKWGKACELFLEMEANGIEP), 634–668 (DSIACSALMRAFNKGGQPSNVFVLMDLMREKEIPF), 669–699 (TGAVFFEIFSACNTLQEWKRAIDLIQMMDPY), 704–738 (SIGLTNQMLHLFGKSGKVEAMMKLFYKIIASGVGI), and 739–773 (NLKTYAILLEHLLAVGNWRKYIEVLEWMSGAGIQP).

It belongs to the PPR family. P subfamily.

The polypeptide is Pentatricopeptide repeat-containing protein At2g41720 (EMB2654) (Arabidopsis thaliana (Mouse-ear cress)).